A 203-amino-acid polypeptide reads, in one-letter code: Guanylate kinase (203 aa).

Residues 5 to 183 (GVLYILSAPS…AVEELKSVII (179 aa)) form the Guanylate kinase-like domain. 12-19 (APSGAGKT) serves as a coordination point for ATP.

Belongs to the guanylate kinase family.

The protein localises to the cytoplasm. It catalyses the reaction GMP + ATP = GDP + ADP. Functionally, essential for recycling GMP and indirectly, cGMP. The chain is Guanylate kinase from Geobacter sulfurreducens (strain ATCC 51573 / DSM 12127 / PCA).